A 310-amino-acid polypeptide reads, in one-letter code: p-hydroxybenzoic acid efflux pump subunit AaeA (310 aa).

Residues 12-32 (AITVVLVILAFIAIFNAWVYY) traverse the membrane as a helical segment.

Belongs to the membrane fusion protein (MFP) (TC 8.A.1) family.

It is found in the cell inner membrane. Forms an efflux pump with AaeB. This Escherichia coli O9:H4 (strain HS) protein is p-hydroxybenzoic acid efflux pump subunit AaeA.